A 336-amino-acid polypeptide reads, in one-letter code: Fructose-1,6-bisphosphatase class 1 (336 aa).

Mg(2+)-binding residues include Glu90, Asp112, Leu114, and Asp115. Residues 115-118, Asn211, and Lys277 contribute to the substrate site; that span reads DGSS. Residue Glu283 coordinates Mg(2+).

This sequence belongs to the FBPase class 1 family. As to quaternary structure, homotetramer. The cofactor is Mg(2+).

It localises to the cytoplasm. The catalysed reaction is beta-D-fructose 1,6-bisphosphate + H2O = beta-D-fructose 6-phosphate + phosphate. It participates in carbohydrate biosynthesis; gluconeogenesis. The polypeptide is Fructose-1,6-bisphosphatase class 1 (Pseudomonas paraeruginosa (strain DSM 24068 / PA7) (Pseudomonas aeruginosa (strain PA7))).